Consider the following 68-residue polypeptide: U-scoloptoxin(02)-Er1a (68 aa).

Positions Met-1–Thr-20 are cleaved as a signal peptide. 3 disulfides stabilise this stretch: Cys-30-Cys-52, Cys-38-Cys-58, and Cys-42-Cys-60.

This sequence belongs to the invertebrate defensin family. As to expression, expressed by the venom gland.

It is found in the secreted. Antibacterial peptide mostly active against Gram-positive bacteria. This Ethmostigmus rubripes (Giant centipede) protein is U-scoloptoxin(02)-Er1a.